Consider the following 68-residue polypeptide: MKPVDVRAMTEDQLKDSLLKLKEEQFKLRFQQASGQMENTARYGQIRRDIARIQTVQTERNSQEEQGS.

It belongs to the universal ribosomal protein uL29 family.

In Maricaulis maris (strain MCS10) (Caulobacter maris), this protein is Large ribosomal subunit protein uL29.